The chain runs to 249 residues: Protein YIPF4 (249 aa).

Residues 1–15 (MQPPGPQQPPPPPLF) show a composition bias toward pro residues. The segment at 1–40 (MQPPGPQQPPPPPLFTPNNGDFTFVSSADAEDPSGSITTP) is disordered. Over 1-116 (MQPPGPQQPP…LGFNRQVVRD (116 aa)) the chain is Cytoplasmic. A compositionally biased stretch (polar residues) spans 16–26 (TPNNGDFTFVS). A helical membrane pass occupies residues 117 to 137 (NPDFWGPLAVVLFFSMISLYG). Residue glutamine 138 is a topological domain, lumenal. The helical transmembrane segment at 139-159 (FKVVSWIITIWIFGSLTIFLL) threads the bilayer. The Cytoplasmic segment spans residues 160-171 (ARVLGGEVAYGQ). The chain crosses the membrane as a helical span at residues 172-192 (VLGVIGYSLLPLIVIAPVLLV). Over 193–200 (VGSFEVVS) the chain is Lumenal. The helical transmembrane segment at 201-221 (TLIKLFGVFWAAYSAASLLVG) threads the bilayer. Topologically, residues 222-228 (EEFKTKK) are cytoplasmic. The chain crosses the membrane as a helical span at residues 229–249 (PLLIYPIFLLYIYFLSLYTGV).

Belongs to the YIP1 family.

It is found in the golgi apparatus. The protein localises to the cis-Golgi network membrane. Its function is as follows. Involved in the maintenance of the Golgi structure. This chain is Protein YIPF4 (YIPF4), found in Gallus gallus (Chicken).